A 292-amino-acid polypeptide reads, in one-letter code: Glycine--tRNA ligase alpha subunit (292 aa).

Belongs to the class-II aminoacyl-tRNA synthetase family. As to quaternary structure, tetramer of two alpha and two beta subunits.

It localises to the cytoplasm. The catalysed reaction is tRNA(Gly) + glycine + ATP = glycyl-tRNA(Gly) + AMP + diphosphate. In Desulfovibrio desulfuricans (strain ATCC 27774 / DSM 6949 / MB), this protein is Glycine--tRNA ligase alpha subunit.